The primary structure comprises 63 residues: Large ribosomal subunit protein bL32 (63 aa).

Positions 1-20 (MANPKAKMSKSRRDKRRAQF) are disordered. The span at 7–18 (KMSKSRRDKRRA) shows a compositional bias: basic residues.

This sequence belongs to the bacterial ribosomal protein bL32 family.

The chain is Large ribosomal subunit protein bL32 from Chlorobaculum tepidum (strain ATCC 49652 / DSM 12025 / NBRC 103806 / TLS) (Chlorobium tepidum).